A 75-amino-acid chain; its full sequence is DNA-directed RNA polymerase subunit epsilon (75 aa).

Belongs to the RNA polymerase subunit epsilon family. As to quaternary structure, RNAP is composed of a core of 2 alpha, a beta and a beta' subunit. The core is associated with a delta subunit, and at least one of epsilon or omega. When a sigma factor is associated with the core the holoenzyme is formed, which can initiate transcription.

The enzyme catalyses RNA(n) + a ribonucleoside 5'-triphosphate = RNA(n+1) + diphosphate. Functionally, a non-essential component of RNA polymerase (RNAP). The sequence is that of DNA-directed RNA polymerase subunit epsilon from Lactobacillus gasseri (strain ATCC 33323 / DSM 20243 / BCRC 14619 / CIP 102991 / JCM 1131 / KCTC 3163 / NCIMB 11718 / NCTC 13722 / AM63).